The primary structure comprises 617 residues: Proline--tRNA ligase (617 aa).

The protein belongs to the class-II aminoacyl-tRNA synthetase family. ProS type 1 subfamily. Homodimer.

The protein localises to the cytoplasm. The enzyme catalyses tRNA(Pro) + L-proline + ATP = L-prolyl-tRNA(Pro) + AMP + diphosphate. Its function is as follows. Catalyzes the attachment of proline to tRNA(Pro) in a two-step reaction: proline is first activated by ATP to form Pro-AMP and then transferred to the acceptor end of tRNA(Pro). As ProRS can inadvertently accommodate and process non-cognate amino acids such as alanine and cysteine, to avoid such errors it has two additional distinct editing activities against alanine. One activity is designated as 'pretransfer' editing and involves the tRNA(Pro)-independent hydrolysis of activated Ala-AMP. The other activity is designated 'posttransfer' editing and involves deacylation of mischarged Ala-tRNA(Pro). The misacylated Cys-tRNA(Pro) is not edited by ProRS. The protein is Proline--tRNA ligase of Streptococcus pneumoniae serotype 19F (strain G54).